The chain runs to 498 residues: MNDFPWLTTVVVLPIVGGSLIVLFPHKGNKTIKWYTYCICFIDLLLIAYVFCYHFELDDPLIQLTENYKWIHFFDFYWRFGIDGLSLGPILLTGFITTLATLSAQPVTRESKLFYFLMLAMYSGQLGTFSSRDILLFFIMWELELIPVYLLLSMWGGKKRLYSATKFILYTAGSSVFLLLGILGMSLYSSNEPTLNFESLTNQSYPVALEIIFYMGFLIAFAVKSPIIPLHTWLPDTHGEAHYSTCMLLAGILLKMGAYGLVRINMELLSRAHSIFCPWLMLLGSIQIIYAASTSLGQRNVKKRIAYSSVSHMGFLILGIGSISETGLNGAILQIISHGFIGAALFFLAGTSYDRLRLLYLDEMGGMAIPMPKIFTIFTTLSMASLALPGMSGFVAELIVLLGIITNQKYLLITKILITFVTAIGMILTPIYSLSILRQMFYGYKLFNTPNSYFFDSGPRELFISISILIPVISIGIYPDFIFSFSADKVEAILSNFL.

Transmembrane regions (helical) follow at residues 4-24 (FPWLTTVVVLPIVGGSLIVLF), 37-57 (YCICFIDLLLIAYVFCYHFEL), 80-100 (FGIDGLSLGPILLTGFITTLA), 112-129 (KLFYFLMLAMYSGQLGTF), 134-154 (ILLFFIMWELELIPVYLLLSM), 167-187 (FILYTAGSSVFLLLGILGMSL), 208-228 (ALEIIFYMGFLIAFAVKSPII), 242-262 (HYSTCMLLAGILLKMGAYGLV), 272-292 (AHSIFCPWLMLLGSIQIIYAA), 305-325 (IAYSSVSHMGFLILGIGSISE), 330-350 (GAILQIISHGFIGAALFFLAG), 386-406 (LALPGMSGFVAELIVLLGIIT), 416-436 (ILITFVTAIGMILTPIYSLSI), and 463-483 (FISISILIPVISIGIYPDFIF).

Belongs to the complex I subunit 4 family.

Its subcellular location is the plastid. It localises to the chloroplast thylakoid membrane. It catalyses the reaction a plastoquinone + NADH + (n+1) H(+)(in) = a plastoquinol + NAD(+) + n H(+)(out). The catalysed reaction is a plastoquinone + NADPH + (n+1) H(+)(in) = a plastoquinol + NADP(+) + n H(+)(out). The chain is NAD(P)H-quinone oxidoreductase chain 4, chloroplastic from Phaseolus vulgaris (Kidney bean).